The primary structure comprises 178 residues: Ribosome maturation factor RimM (178 aa).

The region spanning 99-178 (EGDYYWHDLI…TIEVDWDAGF (80 aa)) is the PRC barrel domain.

It belongs to the RimM family. Binds ribosomal protein uS19.

It localises to the cytoplasm. Its function is as follows. An accessory protein needed during the final step in the assembly of 30S ribosomal subunit, possibly for assembly of the head region. Essential for efficient processing of 16S rRNA. May be needed both before and after RbfA during the maturation of 16S rRNA. It has affinity for free ribosomal 30S subunits but not for 70S ribosomes. This is Ribosome maturation factor RimM from Haemophilus influenzae (strain ATCC 51907 / DSM 11121 / KW20 / Rd).